The following is a 38-amino-acid chain: Potassium channel toxin alpha-KTx 3.7 (38 aa).

Intrachain disulfides connect Cys8–Cys28, Cys14–Cys33, and Cys18–Cys35.

This sequence belongs to the short scorpion toxin superfamily. Potassium channel inhibitor family. Alpha-KTx 03 subfamily. As to expression, expressed by the venom gland.

Its subcellular location is the secreted. Blocks voltage-gated potassium channels Kv1.1/KCNA1 (IC(50)=0.6 nM), Kv1.2/KCNA2 (IC(50)=5.4 nM), Kv1.3/KCNA3 (IC(50)=0.014 nM) potently, and moderately block intermediate conductance calcium-activated potassium channels KCa3.1/KCNN4 (IC(50)=225 nM). Also shows activity on muscle-type nicotinic acetylcholine receptor (nAChR), since it reversibly and dose-dependently inhibits acetylcholine-induced current through mouse muscle-type nAChR heterologously expressed in Xenopus oocytes (IC(50)=1.6 uM). This is Potassium channel toxin alpha-KTx 3.7 from Orthochirus scrobiculosus (Central Asian scorpion).